Consider the following 371-residue polypeptide: MATTDVTVVVKIGTSSLTDTQTGLLRLSVLGPLVEVLTHLRRQGYAVILVSSGAVGVGCARLGWRQRPTAIAEKQAVAAVGQGRLIRLYDDLFSALNQPIAQVLLTRGDLVERSRYVNANRTFAQLLQMGVIPIVNENDTVAVEELKFGDNDSLSALVASMVQAKWLILLTDVDKLYSADPNRDPSAQPIERVLPGIPLQVKAEAQGKSGWGTGGMATKLTAAQIATAAGVTVVITNGKRPEQIPAILAGEAIGTRFDPAPQPASARKRWIAYGLIPEGSLTLDEGAVRAVCEQGRSLLPAGITAISGEFEAGAAVRLCDPSGQEVARGLVNYSAEELRQIKGKKTAEIPRILGYEGVDTAVHRDNLALLN.

Residue K11 coordinates ATP. The substrate site is built by S52, D139, and N151. Residues 171–172 and 213–219 contribute to the ATP site; these read TD and TGGMATK. The 79-residue stretch at 278 to 356 folds into the PUA domain; the sequence is EGSLTLDEGA…AEIPRILGYE (79 aa).

The protein belongs to the glutamate 5-kinase family.

The protein localises to the cytoplasm. It catalyses the reaction L-glutamate + ATP = L-glutamyl 5-phosphate + ADP. Its pathway is amino-acid biosynthesis; L-proline biosynthesis; L-glutamate 5-semialdehyde from L-glutamate: step 1/2. In terms of biological role, catalyzes the transfer of a phosphate group to glutamate to form L-glutamate 5-phosphate. The polypeptide is Glutamate 5-kinase (Synechococcus sp. (strain JA-2-3B'a(2-13)) (Cyanobacteria bacterium Yellowstone B-Prime)).